The chain runs to 311 residues: Aspartate carbamoyltransferase catalytic subunit (311 aa).

The carbamoyl phosphate site is built by Arg55 and Thr56. Lys85 contributes to the L-aspartate binding site. 3 residues coordinate carbamoyl phosphate: Arg106, His135, and Gln138. Residues Arg168 and Arg230 each coordinate L-aspartate. Positions 268 and 269 each coordinate carbamoyl phosphate.

This sequence belongs to the aspartate/ornithine carbamoyltransferase superfamily. ATCase family. In terms of assembly, heterododecamer (2C3:3R2) of six catalytic PyrB chains organized as two trimers (C3), and six regulatory PyrI chains organized as three dimers (R2).

It carries out the reaction carbamoyl phosphate + L-aspartate = N-carbamoyl-L-aspartate + phosphate + H(+). It functions in the pathway pyrimidine metabolism; UMP biosynthesis via de novo pathway; (S)-dihydroorotate from bicarbonate: step 2/3. Its function is as follows. Catalyzes the condensation of carbamoyl phosphate and aspartate to form carbamoyl aspartate and inorganic phosphate, the committed step in the de novo pyrimidine nucleotide biosynthesis pathway. The chain is Aspartate carbamoyltransferase catalytic subunit from Yersinia pseudotuberculosis serotype IB (strain PB1/+).